The chain runs to 329 residues: NTD biosynthesis operon regulator NtdR (329 aa).

Residues 2–56 (PTIDEIAKLCNVSKTTVSRVLNNHPYVSKEKRDMILKAINELDYTPNYLARNFRR) enclose the HTH lacI-type domain. Residues 4-23 (IDEIAKLCNVSKTTVSRVLN) constitute a DNA-binding region (H-T-H motif).

In terms of biological role, positively regulates the ntdABC operon and negatively regulates its own transcription. Binds to NTD to induce ntdABC transcription. This chain is NTD biosynthesis operon regulator NtdR (ntdR), found in Bacillus subtilis (strain 168).